Here is an 875-residue protein sequence, read N- to C-terminus: DNA topoisomerase 3-beta (875 aa).

Positions 3–153 (SVLMVAEKPS…QVTYRAHFSA (151 aa)) constitute a Toprim domain. A Topo IA-type catalytic domain is found at 170-589 (NENEAKSVDA…AIKIFKLKFM (420 aa)). Catalysis depends on tyrosine 332, which acts as the O-(5'-phospho-DNA)-tyrosine intermediate. The segment at 371 to 391 (QTPRKGKDAGDHPPITPMKLG) is disordered.

Belongs to the type IA topoisomerase family.

It catalyses the reaction ATP-independent breakage of single-stranded DNA, followed by passage and rejoining.. Releases the supercoiling and torsional tension of DNA introduced during the DNA replication and transcription by transiently cleaving and rejoining one strand of the DNA duplex. Introduces a single-strand break via transesterification at a target site in duplex DNA. The scissile phosphodiester is attacked by the catalytic tyrosine of the enzyme, resulting in the formation of a DNA-(5'-phosphotyrosyl)-enzyme intermediate and the expulsion of a 3'-OH DNA strand. The free DNA strand than undergoes passage around the unbroken strand thus removing DNA supercoils. Finally, in the religation step, the DNA 3'-OH attacks the covalent intermediate to expel the active-site tyrosine and restore the DNA phosphodiester backbone. Weakly relaxes negative supercoils and displays a distinct preference for binding single-stranded DNA. In Drosophila melanogaster (Fruit fly), this protein is DNA topoisomerase 3-beta (Top3beta).